The sequence spans 564 residues: Transmembrane anterior posterior transformation protein 1 (564 aa).

The span at 1 to 10 shows a compositional bias: low complexity; it reads MAGVCDAAAP. A disordered region spans residues 1-55; it reads MAGVCDAAAPGEGGGGGADGPERTGRGEAEQPGGGGHGPAPQHTETLGFYESDRR. The residue at position 2 (Ala-2) is an N-acetylalanine. Positions 20–29 are enriched in basic and acidic residues; the sequence is GPERTGRGEA. Transmembrane regions (helical) follow at residues 108 to 128, 154 to 176, 233 to 253, 332 to 352, 400 to 420, and 429 to 449; these read LMFF…TLLP, PAQV…MHYV, IGVI…AILI, LWVL…VDIV, GFIP…SIKV, and VILF…VLLG. The interval 464–546 is disordered; the sequence is LFNPPPASTP…ENSELKHRSS (83 aa). Residues 473–489 show a composition bias toward low complexity; that stretch reads PGKPSSKSQSKGKPSQG. Polar residues-rich tracts occupy residues 490–505 and 516–525; these read LSTE…SQPG and VTSNSDQFLT. A Phosphoserine modification is found at Ser-520. Thr-526 is subject to Phosphothreonine. Residues 532–546 show a composition bias toward basic and acidic residues; that stretch reads KDITQENSELKHRSS.

The protein belongs to the TAPT1 family. Ubiquitous. Expressed throughout embryo.

It is found in the cytoplasm. The protein resides in the cytoskeleton. The protein localises to the microtubule organizing center. It localises to the centrosome. Its subcellular location is the cilium basal body. It is found in the membrane. Functionally, plays a role in primary cilia formation. May act as a downstream effector of HOXC8 possibly by transducing or transmitting extracellular information required for axial skeletal patterning during development. May be involved in cartilage and bone development. May play a role in the differentiation of cranial neural crest cells. This chain is Transmembrane anterior posterior transformation protein 1 (Tapt1), found in Mus musculus (Mouse).